The chain runs to 232 residues: Aspartate racemase (232 aa).

Position 49–51 (49–51 (DRT)) interacts with substrate. The Proton donor/acceptor role is filled by Cys84. Substrate-binding positions include 85–87 (NTA) and Lys166. Residue Cys195 is the Proton donor/acceptor of the active site.

The protein belongs to the aspartate/glutamate racemases family.

The enzyme catalyses L-aspartate = D-aspartate. The protein is Aspartate racemase of Thermococcus sp. (strain KS-8).